The following is a 425-amino-acid chain: Glutamate-1-semialdehyde 2,1-aminomutase (425 aa).

Residue Lys-265 is modified to N6-(pyridoxal phosphate)lysine.

This sequence belongs to the class-III pyridoxal-phosphate-dependent aminotransferase family. HemL subfamily. In terms of assembly, homodimer. Pyridoxal 5'-phosphate is required as a cofactor.

The protein localises to the cytoplasm. The enzyme catalyses (S)-4-amino-5-oxopentanoate = 5-aminolevulinate. It participates in porphyrin-containing compound metabolism; protoporphyrin-IX biosynthesis; 5-aminolevulinate from L-glutamyl-tRNA(Glu): step 2/2. The sequence is that of Glutamate-1-semialdehyde 2,1-aminomutase from Opitutus terrae (strain DSM 11246 / JCM 15787 / PB90-1).